Reading from the N-terminus, the 636-residue chain is 1-deoxy-D-xylulose-5-phosphate synthase (636 aa).

Residues histidine 75 and alanine 116–serine 118 contribute to the thiamine diphosphate site. Mg(2+) is bound at residue aspartate 147. Residues glycine 148–alanine 149, asparagine 177, tyrosine 288, and glutamate 370 contribute to the thiamine diphosphate site. Residue asparagine 177 participates in Mg(2+) binding.

It belongs to the transketolase family. DXPS subfamily. As to quaternary structure, homodimer. Requires Mg(2+) as cofactor. Thiamine diphosphate is required as a cofactor.

The enzyme catalyses D-glyceraldehyde 3-phosphate + pyruvate + H(+) = 1-deoxy-D-xylulose 5-phosphate + CO2. It participates in metabolic intermediate biosynthesis; 1-deoxy-D-xylulose 5-phosphate biosynthesis; 1-deoxy-D-xylulose 5-phosphate from D-glyceraldehyde 3-phosphate and pyruvate: step 1/1. Catalyzes the acyloin condensation reaction between C atoms 2 and 3 of pyruvate and glyceraldehyde 3-phosphate to yield 1-deoxy-D-xylulose-5-phosphate (DXP). This is 1-deoxy-D-xylulose-5-phosphate synthase from Ralstonia nicotianae (strain ATCC BAA-1114 / GMI1000) (Ralstonia solanacearum).